We begin with the raw amino-acid sequence, 314 residues long: NADH-ubiquinone oxidoreductase chain 1 (314 aa).

8 helical membrane-spanning segments follow: residues 5–25 (IMPL…VAFL), 78–98 (FSPI…PYLI), 105–125 (LGVL…MIAG), 151–171 (LALI…LNFY), 176–196 (YIWF…SCLA), 227–247 (LIFL…VVIF), 251–271 (DIYS…FIWV), and 294–314 (LSLN…SLLF).

This sequence belongs to the complex I subunit 1 family.

The protein localises to the mitochondrion inner membrane. The catalysed reaction is a ubiquinone + NADH + 5 H(+)(in) = a ubiquinol + NAD(+) + 4 H(+)(out). Core subunit of the mitochondrial membrane respiratory chain NADH dehydrogenase (Complex I) that is believed to belong to the minimal assembly required for catalysis. Complex I functions in the transfer of electrons from NADH to the respiratory chain. The immediate electron acceptor for the enzyme is believed to be ubiquinone. In Anopheles quadrimaculatus (Common malaria mosquito), this protein is NADH-ubiquinone oxidoreductase chain 1 (ND1).